The chain runs to 202 residues: Glycolipid transfer protein 1 (202 aa).

Positions 52, 56, 99, and 138 each coordinate a ganglioside GM3 (d18:1(4E)).

This sequence belongs to the GLTP family.

Its function is as follows. May be involved in glycolipids transfer. In Arabidopsis thaliana (Mouse-ear cress), this protein is Glycolipid transfer protein 1.